Here is a 423-residue protein sequence, read N- to C-terminus: Site-specific recombinase Flp (423 aa).

The Tyr recombinase Flp-type domain occupies 136–422 (GNSHSKKMLK…DYLSSYINRR (287 aa)). The active-site O-(3'-phospho-DNA)-tyrosine intermediate is the Tyr-343.

This sequence belongs to the 'phage' integrase family. As to quaternary structure, homotetramer.

Its function is as follows. Part of the plasmid amplification system, which corrects any decrease in copy number caused by a rare missegregation event. Catalyzes the recombination between the large inverted repetitions of the 2-micron plasmid during plasmid replication. This recombination event changes the direction of one of the two replication forks in the bidirectionally replicating molecule, effectively resulting in multiple rounds of replication from a single initiation event. Binds specifically to the FLP recognition target (FRT) site where it induces DNA to bend. Three types of bend exist. Type I is approximately 60 degrees and results from 1 FLP molecule binding to 1 symmetry element. Type II is &gt;144 degrees and results from FLP molecules binding to symmetry elements a and b. Type III is approximately 65 degrees and results from FLP molecules binding to symmetry elements b and c. The chain is Site-specific recombinase Flp (FLP1) from Saccharomyces cerevisiae (strain ATCC 204508 / S288c) (Baker's yeast).